The chain runs to 1322 residues: Ice nucleation protein InaA (1322 aa).

An octapeptide periodicity region spans residues 162–1281 (ATYGSTLSGT…LTAGENSVLI (1120 aa)). 4 stretches are compositionally biased toward polar residues: residues 271–302 (SLTA…QKGS), 327–350 (TQTA…QKGS), 373–398 (GSTQ…QKGS), and 423–446 (TQTA…QKGS). Disordered regions lie at residues 271 to 303 (SLTA…KGSD), 327 to 358 (TQTA…GYGS), 372 to 399 (YGST…KGSD), and 423 to 448 (TQTA…GSDL).

It belongs to the bacterial ice nucleation protein family.

It is found in the cell outer membrane. In terms of biological role, ice nucleation proteins enable bacteria to nucleate crystallization in supercooled water. In Pantoea ananas (Erwinia uredovora), this protein is Ice nucleation protein InaA (inaA).